A 495-amino-acid polypeptide reads, in one-letter code: Membrane-bound lytic murein transglycosylase F (495 aa).

The N-terminal stretch at 1-30 is a signal peptide; that stretch reads MSRIRHHRFIQSCLVISTLLITLTGCQVES. The segment at 31–270 is non-LT domain; the sequence is EPKTKLEQIR…LLEEKYFGHV (240 aa). The interval 272–495 is LT domain; that stretch reads SFDYVDTRAF…SVSQAIETKK (224 aa). Glu-315 is an active-site residue.

It in the N-terminal section; belongs to the bacterial solute-binding protein 3 family. In the C-terminal section; belongs to the transglycosylase Slt family.

It is found in the cell outer membrane. It carries out the reaction Exolytic cleavage of the (1-&gt;4)-beta-glycosidic linkage between N-acetylmuramic acid (MurNAc) and N-acetylglucosamine (GlcNAc) residues in peptidoglycan, from either the reducing or the non-reducing ends of the peptidoglycan chains, with concomitant formation of a 1,6-anhydrobond in the MurNAc residue.. Murein-degrading enzyme that degrades murein glycan strands and insoluble, high-molecular weight murein sacculi, with the concomitant formation of a 1,6-anhydromuramoyl product. Lytic transglycosylases (LTs) play an integral role in the metabolism of the peptidoglycan (PG) sacculus. Their lytic action creates space within the PG sacculus to allow for its expansion as well as for the insertion of various structures such as secretion systems and flagella. This Aliivibrio fischeri (strain ATCC 700601 / ES114) (Vibrio fischeri) protein is Membrane-bound lytic murein transglycosylase F.